Reading from the N-terminus, the 511-residue chain is Ribonuclease Y (511 aa).

The helical transmembrane segment at 2–22 (ITTVIIAIVCFAVGGGLSYML) threads the bilayer. The KH domain maps to 201 to 261 (SVTVFHIESD…VRREIARLAL (61 aa)). Residues 327-420 (LLQHARETAN…VQVCDAISGA (94 aa)) form the HD domain.

This sequence belongs to the RNase Y family.

The protein resides in the cell membrane. Endoribonuclease that initiates mRNA decay. This Phocaeicola vulgatus (strain ATCC 8482 / DSM 1447 / JCM 5826 / CCUG 4940 / NBRC 14291 / NCTC 11154) (Bacteroides vulgatus) protein is Ribonuclease Y.